Here is a 1041-residue protein sequence, read N- to C-terminus: Beta-galactosidase (1041 aa).

Residues N103 and D201 each coordinate substrate. D201 is a binding site for Na(+). Mg(2+)-binding residues include E415, H417, and E460. Residues E460 and 536–539 each bind substrate; that span reads EYAH. Residue E460 is the Proton donor of the active site. Residue E536 is the Nucleophile of the active site. Mg(2+) is bound at residue N596. The Na(+) site is built by F600 and N603. The substrate site is built by N603 and W1016.

This sequence belongs to the glycosyl hydrolase 2 family. Homotetramer. The cofactor is Mg(2+). Na(+) serves as cofactor.

The catalysed reaction is Hydrolysis of terminal non-reducing beta-D-galactose residues in beta-D-galactosides.. The polypeptide is Beta-galactosidase (Alteromonas mediterranea (strain DSM 17117 / CIP 110805 / LMG 28347 / Deep ecotype)).